Here is a 431-residue protein sequence, read N- to C-terminus: Tol-Pal system protein TolB (431 aa).

An N-terminal signal peptide occupies residues 1 to 26; sequence MSLMTKLGFRALVASCLITAGSAANA. Residues 406 to 431 are disordered; it reads DGSAPPQILSVQGGSVREPSWGPFMQ.

This sequence belongs to the TolB family. The Tol-Pal system is composed of five core proteins: the inner membrane proteins TolA, TolQ and TolR, the periplasmic protein TolB and the outer membrane protein Pal. They form a network linking the inner and outer membranes and the peptidoglycan layer.

It is found in the periplasm. Part of the Tol-Pal system, which plays a role in outer membrane invagination during cell division and is important for maintaining outer membrane integrity. This is Tol-Pal system protein TolB from Burkholderia orbicola (strain AU 1054).